The following is a 187-amino-acid chain: Oligoribonuclease (187 aa).

The region spanning 7–170 is the Exonuclease domain; that stretch reads LCWLDMEMTG…DDILESIEEM (164 aa). Y128 is a catalytic residue.

It belongs to the oligoribonuclease family.

The protein resides in the cytoplasm. Functionally, 3'-to-5' exoribonuclease specific for small oligoribonucleotides. The protein is Oligoribonuclease of Neisseria meningitidis serogroup C / serotype 2a (strain ATCC 700532 / DSM 15464 / FAM18).